Here is a 213-residue protein sequence, read N- to C-terminus: Redox-sensing transcriptional repressor Rex (213 aa).

The segment at residues 18 to 57 (LYYRIFKRFHAEKIERANSKQIAEAIGIDSATVRRDFSYF) is a DNA-binding region (H-T-H motif). 92–97 (GIGNMG) lines the NAD(+) pocket.

Belongs to the transcriptional regulatory Rex family. As to quaternary structure, homodimer.

Its subcellular location is the cytoplasm. Its function is as follows. Modulates transcription in response to changes in cellular NADH/NAD(+) redox state. Binds to the promoter of the aldehyde-alcohol dehydrogenase adhE gene. Functions as a redox-dependent repressor of adhE expression. The protein is Redox-sensing transcriptional repressor Rex of Streptococcus pneumoniae serotype 19F (strain G54).